Reading from the N-terminus, the 210-residue chain is ATP-dependent Clp protease proteolytic subunit (210 aa).

The Nucleophile role is filled by S106. H131 is a catalytic residue.

The protein belongs to the peptidase S14 family. In terms of assembly, fourteen ClpP subunits assemble into 2 heptameric rings which stack back to back to give a disk-like structure with a central cavity, resembling the structure of eukaryotic proteasomes.

It is found in the cytoplasm. It carries out the reaction Hydrolysis of proteins to small peptides in the presence of ATP and magnesium. alpha-casein is the usual test substrate. In the absence of ATP, only oligopeptides shorter than five residues are hydrolyzed (such as succinyl-Leu-Tyr-|-NHMec, and Leu-Tyr-Leu-|-Tyr-Trp, in which cleavage of the -Tyr-|-Leu- and -Tyr-|-Trp bonds also occurs).. Its function is as follows. Cleaves peptides in various proteins in a process that requires ATP hydrolysis. Has a chymotrypsin-like activity. Plays a major role in the degradation of misfolded proteins. The sequence is that of ATP-dependent Clp protease proteolytic subunit from Azospirillum brasilense.